We begin with the raw amino-acid sequence, 464 residues long: Glutamate--tRNA ligase (464 aa).

The short motif at P8–N18 is the 'HIGH' region element. Residues C96, C98, C123, and H125 each coordinate Zn(2+). Positions K240–R244 match the 'KMSKS' region motif. Residue K243 coordinates ATP.

This sequence belongs to the class-I aminoacyl-tRNA synthetase family. Glutamate--tRNA ligase type 1 subfamily. In terms of assembly, monomer. The cofactor is Zn(2+).

The protein localises to the cytoplasm. The catalysed reaction is tRNA(Glu) + L-glutamate + ATP = L-glutamyl-tRNA(Glu) + AMP + diphosphate. Catalyzes the attachment of glutamate to tRNA(Glu) in a two-step reaction: glutamate is first activated by ATP to form Glu-AMP and then transferred to the acceptor end of tRNA(Glu). This is Glutamate--tRNA ligase from Hydrogenobaculum sp. (strain Y04AAS1).